Reading from the N-terminus, the 505-residue chain is Glycerol kinase 1 (505 aa).

Thr13 is an ADP binding site. 3 residues coordinate ATP: Thr13, Thr14, and Ser15. A sn-glycerol 3-phosphate-binding site is contributed by Thr13. Arg17 contributes to the ADP binding site. Residues Arg83, Glu84, and Tyr135 each contribute to the sn-glycerol 3-phosphate site. Glycerol is bound by residues Arg83, Glu84, and Tyr135. A Phosphohistidine; by HPr modification is found at His231. Sn-glycerol 3-phosphate is bound at residue Asp245. Residues Asp245 and Gln246 each contribute to the glycerol site. 2 residues coordinate ADP: Thr267 and Gly310. The ATP site is built by Thr267, Gly310, Gln314, and Gly411. Residues Gly411 and Asn415 each coordinate ADP.

It belongs to the FGGY kinase family. As to quaternary structure, homotetramer and homodimer (in equilibrium). The phosphoenolpyruvate-dependent sugar phosphotransferase system (PTS), including enzyme I, and histidine-containing protein (HPr) are required for the phosphorylation, which leads to the activation of the enzyme.

The catalysed reaction is glycerol + ATP = sn-glycerol 3-phosphate + ADP + H(+). It participates in polyol metabolism; glycerol degradation via glycerol kinase pathway; sn-glycerol 3-phosphate from glycerol: step 1/1. Activated by phosphorylation and inhibited by fructose 1,6-bisphosphate (FBP). Functionally, key enzyme in the regulation of glycerol uptake and metabolism. Catalyzes the phosphorylation of glycerol to yield sn-glycerol 3-phosphate. The protein is Glycerol kinase 1 of Lactiplantibacillus plantarum (strain ATCC BAA-793 / NCIMB 8826 / WCFS1) (Lactobacillus plantarum).